The following is a 698-amino-acid chain: Sialic acid-binding Ig-like lectin 11 (698 aa).

An N-terminal signal peptide occupies residues 1 to 27 (MVPGQAQPQSPEMLLLPLLLPVLGAGS). The Extracellular portion of the chain corresponds to 28-561 (LNKDPSYSLQ…KLEHGGGLGL (534 aa)). The 104-residue stretch at 31 to 134 (DPSYSLQVQR…DEAWYFFRVE (104 aa)) folds into the Ig-like V-type domain. 3 cysteine pairs are disulfide-bonded: Cys49–Cys186, Cys54–Cys114, and Cys177–Cys228. 2 N-linked (GlcNAc...) asparagine glycosylation sites follow: Asn55 and Asn90. Arg132 is a binding site for N-acetylneuraminate. Ig-like C2-type domains follow at residues 159-244 (PDVY…RTVR), 251-350 (PKDL…LDLS), and 355-452 (PENL…LSLS). An N-linked (GlcNAc...) asparagine glycan is attached at Asn262. A disulfide bridge connects residues Cys287 and Cys334. Asn366 and Asn375 each carry an N-linked (GlcNAc...) asparagine glycan. Cys391 and Cys436 are joined by a disulfide. N-linked (GlcNAc...) asparagine glycosylation is found at Asn497 and Asn515. A helical membrane pass occupies residues 562-584 (GAALGAGVAALLAFCSCLVVFRV). Over 585-698 (KICRKEARKR…EREMSGMVPK (114 aa)) the chain is Cytoplasmic. The interval 596 to 635 (AAEQDVPSTLGPISQGHQHECSAGSSQDHPPPGAATYTPG) is disordered. The ITIM motif motif lies at 642 to 647 (LHYASL). Tyr668 carries the phosphotyrosine modification. Positions 675 to 698 (TGQPLRGPGFGLQLEREMSGMVPK) are disordered.

It belongs to the immunoglobulin superfamily. SIGLEC (sialic acid binding Ig-like lectin) family. In terms of assembly, interacts with PTPN6/SHP-1 and PTPN11/SHP-2 upon phosphorylation. In terms of processing, phosphorylated on tyrosine residues. In terms of tissue distribution, expressed by macrophages in various tissues including Kupffer cells. Also found in brain microglia.

The protein localises to the membrane. Functionally, putative adhesion molecule that mediates sialic-acid dependent binding to cells. Preferentially binds to alpha-2,8-linked sialic acid. The sialic acid recognition site may be masked by cis interactions with sialic acids on the same cell surface. In the immune response, may act as an inhibitory receptor upon ligand induced tyrosine phosphorylation by recruiting cytoplasmic phosphatase(s) via their SH2 domain(s) that block signal transduction through dephosphorylation of signaling molecules. The sequence is that of Sialic acid-binding Ig-like lectin 11 (SIGLEC11) from Homo sapiens (Human).